A 309-amino-acid polypeptide reads, in one-letter code: HPr kinase/phosphorylase (309 aa).

Catalysis depends on residues His138 and Lys159. Residue 153–160 participates in ATP binding; that stretch reads GDSGIGKS. Ser160 contacts Mg(2+). The active-site Proton acceptor; for phosphorylation activity. Proton donor; for dephosphorylation activity is the Asp177. The important for the catalytic mechanism of both phosphorylation and dephosphorylation stretch occupies residues 201 to 210; the sequence is LEIRGVGIID. A Mg(2+)-binding site is contributed by Glu202. Residue Arg243 is part of the active site. Residues 264-269 form an important for the catalytic mechanism of dephosphorylation region; the sequence is PVKTGR.

Belongs to the HPrK/P family. In terms of assembly, homohexamer. It depends on Mg(2+) as a cofactor.

It carries out the reaction [HPr protein]-L-serine + ATP = [HPr protein]-O-phospho-L-serine + ADP + H(+). The catalysed reaction is [HPr protein]-O-phospho-L-serine + phosphate + H(+) = [HPr protein]-L-serine + diphosphate. In terms of biological role, catalyzes the ATP- as well as the pyrophosphate-dependent phosphorylation of a specific serine residue in HPr, a phosphocarrier protein of the phosphoenolpyruvate-dependent sugar phosphotransferase system (PTS). HprK/P also catalyzes the pyrophosphate-producing, inorganic phosphate-dependent dephosphorylation (phosphorolysis) of seryl-phosphorylated HPr (P-Ser-HPr). The two antagonistic activities of HprK/P are regulated by several intracellular metabolites, which change their concentration in response to the absence or presence of rapidly metabolisable carbon sources (glucose, fructose, etc.) in the growth medium. Therefore, by controlling the phosphorylation state of HPr, HPrK/P is a sensor enzyme that plays a major role in the regulation of carbon metabolism and sugar transport: it mediates carbon catabolite repression (CCR), and regulates PTS-catalyzed carbohydrate uptake and inducer exclusion. In Streptococcus thermophilus (strain ATCC BAA-250 / LMG 18311), this protein is HPr kinase/phosphorylase.